We begin with the raw amino-acid sequence, 585 residues long: Nucleoporin p58/p45 (585 aa).

Repeat copies occupy residues 7–8 (FG), 30–31 (FG), 42–43 (FG), 61–62 (FG), and 66–67 (FG). The 14 X 2 AA repeats of F-G stretch occupies residues 7–565 (FGSGTLGSTT…VSNPASAGFG (559 aa)). The disordered stretch occupies residues 194–232 (TSAASSEGLGGIDFSTSSDKKSDKTGTRPEDSKALKDEN). The segment covering 211 to 232 (SDKKSDKTGTRPEDSKALKDEN) has biased composition (basic and acidic residues). Coiled coils occupy residues 242 to 262 (ENLQ…SRMS) and 300 to 367 (ETAQ…SHIT). Thr-317 carries the phosphothreonine modification. 9 consecutive repeat copies span residues 474–475 (FG), 478–479 (FG), 499–500 (FG), 505–506 (FG), 515–516 (FG), 517–518 (FG), 531–532 (FG), 554–555 (FG), and 564–565 (FG). The interval 563–585 (GFGTGGQLLQLKRPPAGNKRGKR) is disordered.

It belongs to the NUP58 family. As to quaternary structure, component of the p62 complex, a complex composed of NUP62, NUP54, and isoform p58 and isoform p45 of NUP58. Isoform p58 interacts with NUTF2. Isoform p58 interacts with SRP1-alpha and Importin p97 proteins when they are together, but not with SRP1-alpha protein alone. O-glycosylated. In terms of tissue distribution, expressed in liver.

The protein resides in the nucleus. It localises to the nuclear pore complex. Its subcellular location is the nucleus membrane. In terms of biological role, component of the nuclear pore complex, a complex required for the trafficking across the nuclear membrane. This chain is Nucleoporin p58/p45, found in Rattus norvegicus (Rat).